The following is a 376-amino-acid chain: Erythronate-4-phosphate dehydrogenase (376 aa).

2 residues coordinate substrate: Ser45 and Thr67. Asp147 contacts NAD(+). Residue Arg209 is part of the active site. Residue Asp233 coordinates NAD(+). The active site involves Glu238. His255 functions as the Proton donor in the catalytic mechanism. Gly258 contributes to the NAD(+) binding site. Position 259 (Tyr259) interacts with substrate.

The protein belongs to the D-isomer specific 2-hydroxyacid dehydrogenase family. PdxB subfamily. As to quaternary structure, homodimer.

Its subcellular location is the cytoplasm. It carries out the reaction 4-phospho-D-erythronate + NAD(+) = (R)-3-hydroxy-2-oxo-4-phosphooxybutanoate + NADH + H(+). It participates in cofactor biosynthesis; pyridoxine 5'-phosphate biosynthesis; pyridoxine 5'-phosphate from D-erythrose 4-phosphate: step 2/5. In terms of biological role, catalyzes the oxidation of erythronate-4-phosphate to 3-hydroxy-2-oxo-4-phosphonooxybutanoate. The sequence is that of Erythronate-4-phosphate dehydrogenase from Shewanella sp. (strain MR-7).